Reading from the N-terminus, the 840-residue chain is Putative pentatricopeptide repeat-containing protein At1g31840 (840 aa).

PPR repeat units follow at residues 98-128 (KDPS…MITN), 145-179 (DADV…GVVI), 180-214 (PQDS…GIEP), 216-250 (GVSA…GFRV), 251-284 (GIVS…GPAP), 285-319 (NVVT…GIEP), 320-354 (DLIA…GVKL), 355-389 (DVVV…GISP), 390-424 (NVVT…GMEP), 425-459 (SIVT…GYPP), 460-494 (DVVI…SIRL), 495-529 (NVVV…GIKP), 530-564 (DVAT…GLEP), 565-599 (DALA…KISA), 600-634 (DIAV…KMEP), 635-669 (DIVT…PFGP), 670-704 (NTVT…GSKP), 705-739 (NAVT…GISP), 740-774 (SIVS…KLLP), and 775-809 (DVVA…GVKP).

This sequence belongs to the PPR family. P subfamily.

In Arabidopsis thaliana (Mouse-ear cress), this protein is Putative pentatricopeptide repeat-containing protein At1g31840.